A 353-amino-acid chain; its full sequence is Nucleotide-binding protein sce5766 (353 aa).

27–34 (GLSGAGKS) is a binding site for ATP. Residue 76 to 79 (DVRV) participates in GTP binding. The tract at residues 310–353 (SGVPSGVGEGMAGAPGVDLRLAQPGATPSEPRPASDTSVTGGER) is disordered. A compositionally biased stretch (polar residues) spans 344–353 (SDTSVTGGER).

It belongs to the RapZ-like family.

Its function is as follows. Displays ATPase and GTPase activities. The protein is Nucleotide-binding protein sce5766 of Sorangium cellulosum (strain So ce56) (Polyangium cellulosum (strain So ce56)).